The following is a 296-amino-acid chain: Maltose/maltodextrin transport system permease protein MalG (296 aa).

Over 1 to 12 (MAMVQPKSQKAR) the chain is Cytoplasmic. A helical transmembrane segment spans residues 13 to 35 (LFITHLLLLLFIAAIMFPLLMVV). Over 36 to 88 (AISLRQGNFATGSLIPEQISWDHWKLALGFSVEQADGRITPPPFPVLLWLWNS) the chain is Periplasmic. Residues 85–281 (LWNSVKVAGI…LPITIVFLLA (197 aa)) form the ABC transmembrane type-1 domain. The helical transmembrane segment at 89-111 (VKVAGISAIGIVALSTTCAYAFA) threads the bilayer. The Cytoplasmic portion of the chain corresponds to 112–123 (RMRFPGKATLLK). The helical transmembrane segment at 124–143 (GMLIFQMFPAVLSLVALYAL) threads the bilayer. At 144–152 (FDRLGEYIP) the chain is on the periplasmic side. A helical transmembrane segment spans residues 153 to 175 (FIGLNTHGGVIFAYLGGIALHVW). Residues 176-204 (TIKGYFETIDSSLEEAAALDGATPWQAFR) lie on the Cytoplasmic side of the membrane. A helical membrane pass occupies residues 205 to 227 (LVLLPLSVPILAVVFILSFIAAI). Residues 228-257 (TEVPVASLLLRDVNSYTLAVGMQQYLNPQN) are Periplasmic-facing. The chain crosses the membrane as a helical span at residues 258 to 280 (YLWGDFAAAAVMSALPITIVFLL). Residues 281 to 296 (AQRWLVNGLTAGGVKG) are Cytoplasmic-facing.

Belongs to the binding-protein-dependent transport system permease family. MalFG subfamily. As to quaternary structure, the complex is composed of two ATP-binding proteins (MalK), two transmembrane proteins (MalG and MalF) and a solute-binding protein (MalE).

Its subcellular location is the cell inner membrane. Part of the ABC transporter complex MalEFGK involved in maltose/maltodextrin import. Probably responsible for the translocation of the substrate across the membrane. This Escherichia coli O157:H7 protein is Maltose/maltodextrin transport system permease protein MalG (malG).